The primary structure comprises 473 residues: Photosystem II CP43 reaction center protein (473 aa).

The propeptide occupies methionine 1–glutamate 14. Threonine 15 is subject to N-acetylthreonine. Phosphothreonine is present on threonine 15. 5 consecutive transmembrane segments (helical) span residues leucine 69–alanine 93, leucine 134–asparagine 155, lysine 178–threonine 200, lysine 255–serine 275, and tryptophan 291–alanine 312. Residue glutamate 367 coordinates [CaMn4O5] cluster. A helical transmembrane segment spans residues arginine 447–proline 471.

The protein belongs to the PsbB/PsbC family. PsbC subfamily. PSII is composed of 1 copy each of membrane proteins PsbA, PsbB, PsbC, PsbD, PsbE, PsbF, PsbH, PsbI, PsbJ, PsbK, PsbL, PsbM, PsbT, PsbX, PsbY, PsbZ, Psb30/Ycf12, at least 3 peripheral proteins of the oxygen-evolving complex and a large number of cofactors. It forms dimeric complexes. The cofactor is Binds multiple chlorophylls and provides some of the ligands for the Ca-4Mn-5O cluster of the oxygen-evolving complex. It may also provide a ligand for a Cl- that is required for oxygen evolution. PSII binds additional chlorophylls, carotenoids and specific lipids..

The protein resides in the plastid. It localises to the chloroplast thylakoid membrane. One of the components of the core complex of photosystem II (PSII). It binds chlorophyll and helps catalyze the primary light-induced photochemical processes of PSII. PSII is a light-driven water:plastoquinone oxidoreductase, using light energy to abstract electrons from H(2)O, generating O(2) and a proton gradient subsequently used for ATP formation. This is Photosystem II CP43 reaction center protein from Amborella trichopoda.